We begin with the raw amino-acid sequence, 147 residues long: MRALIQRVLEAKVVVDGETTGEIQHGLLVFLGIGREDTLATGQKLIDKILKYRIFDDEQGKMGWNVSQANGGILLVSQFTLMAQTQKGLRPDFGPAMPPSDAKALYEQLVEYTRSQFENVQTGVFAADMKVHLINDGPVTFNLEVEA.

The Gly-cisPro motif, important for rejection of L-amino acids signature appears at 137-138; it reads GP.

The protein belongs to the DTD family. As to quaternary structure, homodimer.

It localises to the cytoplasm. The catalysed reaction is glycyl-tRNA(Ala) + H2O = tRNA(Ala) + glycine + H(+). The enzyme catalyses a D-aminoacyl-tRNA + H2O = a tRNA + a D-alpha-amino acid + H(+). An aminoacyl-tRNA editing enzyme that deacylates mischarged D-aminoacyl-tRNAs. Also deacylates mischarged glycyl-tRNA(Ala), protecting cells against glycine mischarging by AlaRS. Acts via tRNA-based rather than protein-based catalysis; rejects L-amino acids rather than detecting D-amino acids in the active site. By recycling D-aminoacyl-tRNA to D-amino acids and free tRNA molecules, this enzyme counteracts the toxicity associated with the formation of D-aminoacyl-tRNA entities in vivo and helps enforce protein L-homochirality. The sequence is that of D-aminoacyl-tRNA deacylase from Acinetobacter baumannii (strain AYE).